The following is an 821-amino-acid chain: MAESGGGGGCCPPMDLMRSETMQLVQLIVPMESAHLTVSYLGDLGLVQFKDLNSEKSPFQRTYAAQIKRCGEMARKIRFFRDQMSKAGVPAKEMQGKENDIDLDDVEVKLGELEAELVEINANNDKLQRSYNELMEYKLVLQKAGEFFSSAHRSAADQQRETESQQAGEDLLESPLLQEEKSIDSTKQVKLGFLTGLVPREKSMVFERILFRATRGNIFIRQTVIEEPVIDPNSGEKAEKNVFVVFYSGERAKSKILKICEAFGANRYPFSEDLGRQAQMITEVSGRLSELKTTIDAGLGQRNILLQTIGDKFELWNLKVRKEKAIYHTLNMLSLDVTKKCLVAEGWSPVFASREIQDALQRAAVDSNSQVGSIFQVLRTKESPPTYFRTNKFTSAIQEIVDAYGVAKYQEANPGVFTIVTFPFLFAVMFGDWGHGICILLATMYLILKEKKLASQKLGDIMEMAFGGRYVILMMSLFSIYTGLIYNEFFSIPFPLFAPSAYDCRDVSCSEATTIGLIKVRDTYPFGLDPVWHGSRSELPFLNSLKMKMSILLGVSQMNLGIIMSYFNARFFKSSVNIWFQFIPQMIFLNSLFGYLSVLIIIKWCTGSQADLYHVMIYMFLSPMDELGENQLFPHQKTLQLVLLFLALVSVPCMLLPKPFILKKQHEARHQGQAYAPLDETDESLHVETNGGGSHGHEEFEFSEIFVHQLIHTIEFVLGAVSNTASYLRLWALSLAHSELSSVFYEKVLLLAWGYNNPLILIVGVLVFIFATVGVLLVMETLSAFLHALRLHWVEFQNKFYEGDGYKFAPFTFIFTANEDE.

The residue at position 2 (A2) is an N-acetylalanine. Over 2-421 (AESGGGGGCC…ANPGVFTIVT (420 aa)) the chain is Cytoplasmic. Positions 97-144 (KENDIDLDDVEVKLGELEAELVEINANNDKLQRSYNELMEYKLVLQKA) form a coiled coil. At S174 the chain carries Phosphoserine. Residues 422–442 (FPFLFAVMFGDWGHGICILLA) traverse the membrane as a helical segment. At 443-469 (TMYLILKEKKLASQKLGDIMEMAFGGR) the chain is on the vacuolar side. Residues 470 to 490 (YVILMMSLFSIYTGLIYNEFF) form a helical membrane-spanning segment. Residues 491–548 (SIPFPLFAPSAYDCRDVSCSEATTIGLIKVRDTYPFGLDPVWHGSRSELPFLNSLKMK) are Cytoplasmic-facing. Residues 549-569 (MSILLGVSQMNLGIIMSYFNA) form a helical membrane-spanning segment. Over 570 to 581 (RFFKSSVNIWFQ) the chain is Vacuolar. A helical transmembrane segment spans residues 582–602 (FIPQMIFLNSLFGYLSVLIII). The Cytoplasmic portion of the chain corresponds to 603 to 640 (KWCTGSQADLYHVMIYMFLSPMDELGENQLFPHQKTLQ). A helical membrane pass occupies residues 641–661 (LVLLFLALVSVPCMLLPKPFI). Residues 662–758 (LKKQHEARHQ…LLLAWGYNNP (97 aa)) are Vacuolar-facing. A helical transmembrane segment spans residues 759–779 (LILIVGVLVFIFATVGVLLVM). Topologically, residues 780 to 821 (ETLSAFLHALRLHWVEFQNKFYEGDGYKFAPFTFIFTANEDE) are cytoplasmic.

This sequence belongs to the V-ATPase 116 kDa subunit family. As to quaternary structure, V-ATPase is a heteromultimeric enzyme composed of a peripheral catalytic V1 complex (components A to H) attached to an integral membrane V0 proton pore complex (components: a, c, c'', d and e). Expressed in etiolated seedlings hypocotyls.

The protein resides in the vacuole membrane. Functionally, essential component of the vacuolar proton pump (V-ATPase), a multimeric enzyme that catalyzes the translocation of protons across the membranes. Required for assembly and activity of the V-ATPase. Involved in vacuolar nutrient storage (e.g. accumulation and storage of nitrate) and in tolerance to some toxic ions (e.g. zinc ions sequestration in vacuoles). This chain is V-type proton ATPase subunit a3 (VHA-a3), found in Arabidopsis thaliana (Mouse-ear cress).